The following is a 66-amino-acid chain: uncharacterized protein (66 aa).

Transmembrane regions (helical) follow at residues 4-24 and 38-58; these read ALFI…LLIF and LLTP…ILVL.

Its subcellular location is the membrane. This is an uncharacterized protein from Saccharomyces cerevisiae (strain ATCC 204508 / S288c) (Baker's yeast).